The following is a 574-amino-acid chain: Isocitrate dehydrogenase kinase/phosphatase (574 aa).

ATP is bound by residues 315–321 (APGIRGM) and K336. D371 is a catalytic residue.

The protein belongs to the AceK family.

It localises to the cytoplasm. The catalysed reaction is L-seryl-[isocitrate dehydrogenase] + ATP = O-phospho-L-seryl-[isocitrate dehydrogenase] + ADP + H(+). Its function is as follows. Bifunctional enzyme which can phosphorylate or dephosphorylate isocitrate dehydrogenase (IDH) on a specific serine residue. This is a regulatory mechanism which enables bacteria to bypass the Krebs cycle via the glyoxylate shunt in response to the source of carbon. When bacteria are grown on glucose, IDH is fully active and unphosphorylated, but when grown on acetate or ethanol, the activity of IDH declines drastically concomitant with its phosphorylation. This is Isocitrate dehydrogenase kinase/phosphatase from Escherichia coli O81 (strain ED1a).